A 619-amino-acid chain; its full sequence is Cationic amino acid transporter 3 (619 aa).

Over 1 to 36 (MLWQALRRFGQKLVRRRLLELGMGETRLARCLSTLD) the chain is Cytoplasmic. The chain crosses the membrane as a helical span at residues 37 to 57 (LVALGVGSTLGAGVYVLAGEV). Residues 58-61 (AKEK) lie on the Extracellular side of the membrane. A helical transmembrane segment spans residues 62–82 (AGPSIVICFLVAALSSVLAGL). Residues 83-107 (CYAEFGARVPGSGSAYLYSYVTVGE) lie on the Cytoplasmic side of the membrane. The chain crosses the membrane as a helical span at residues 108–128 (LWAFTTGWNLILSYVIGTASV). At 129–162 (ARAWSSAFDNLIGNHISQTLKGTILLNMPHVLAE) the chain is on the extracellular side. Residues 163–183 (YPDFFALALVLLLTGLLVLGA) form a helical membrane-spanning segment. Topologically, residues 184-191 (NESGLVTK) are cytoplasmic. Residues 192–212 (VFTGMNLLVLGFVIISGFIKG) form a helical membrane-spanning segment. Over 213–244 (ELRNWKLTKEDYCLTMSESNGTCSLDSMGSGG) the chain is Extracellular. Asn232 is a glycosylation site (N-linked (GlcNAc...) asparagine). A helical transmembrane segment spans residues 245-265 (FMPFGLEGILRGAATCFYAFV). At 266-285 (GFDCIATTGEEAQNPQRSIP) the chain is on the cytoplasmic side. A helical membrane pass occupies residues 286–306 (MGIVISLSICFLAYFGVSSAL). The Extracellular portion of the chain corresponds to 307–335 (TLMMPYYKLQPESPLPEAFTYVGWEPARY). The helical transmembrane segment at 336–356 (LVAIGSLCALSTSLLGSMFPM) threads the bilayer. Topologically, residues 357–382 (PRVIYAMAEDGLLFRVLARVHNGTHT) are cytoplasmic. The helical transmembrane segment at 383–403 (PIVATVVSGVIAAFMAFLFEL) threads the bilayer. At 404-406 (TDL) the chain is on the extracellular side. Residues 407–427 (VDLMSIGTLLAYSLVSICVLI) traverse the membrane as a helical segment. At 428–475 (LRYQPDQEMKNGEEEVELQEERTLEAEKLTVQALFCQVDSIPTLLSGR) the chain is on the cytoplasmic side. A helical transmembrane segment spans residues 476–496 (IVYVCSSLLAVLLTVLCLVLT). Over 497-507 (WWTTPLHSGDP) the chain is Extracellular. A helical transmembrane segment spans residues 508–528 (VWVTVVVLILGLILGISGVIW). The Cytoplasmic portion of the chain corresponds to 529–540 (RQPQNRTPLHFK). The chain crosses the membrane as a helical span at residues 541–561 (VPVVPLLPLVSIFVNVYLMMQ). The Extracellular portion of the chain corresponds to 562–569 (MTADTWAR). The chain crosses the membrane as a helical span at residues 570–590 (FGVWMLIGFAIYFGYGIQHSV). Residues 591–619 (EEVKNHQTLPKTRPQTIDLDLTTSCVHSI) lie on the Cytoplasmic side of the membrane. Thr606 is modified (phosphothreonine). Ser618 carries the post-translational modification Phosphoserine.

The protein belongs to the amino acid-polyamine-organocation (APC) superfamily. Cationic amino acid transporter (CAT) (TC 2.A.3.3) family. Post-translationally, N-glycosylated. As to expression, highly expressed in brain.

It is found in the cell membrane. It carries out the reaction L-arginine(in) = L-arginine(out). The catalysed reaction is L-lysine(in) = L-lysine(out). It catalyses the reaction L-ornithine(in) = L-ornithine(out). Its activity is regulated as follows. Inhibited by high potassium ions-induced membrane depolarization. Its function is as follows. Uniporter that mediates the uptake of cationic L-amino acids such as L-arginine, L-lysine and L-ornithine. The transport is sodium ions- and pH-independent, moderately trans-stimulated and is mediated by passive diffusion. The sequence is that of Cationic amino acid transporter 3 from Rattus norvegicus (Rat).